The primary structure comprises 557 residues: Leucine-rich glioma-inactivated protein 1 (557 aa).

Positions 1-34 are cleaved as a signal peptide; it reads MESERSKRMGNACIPLKRIAYFLCLLSALLLTEG. The LRRNT domain occupies 35 to 72; that stretch reads KKPAKPKCPAVCTCTKDNALCENARSIPRTVPPDVISL. 3 LRR repeats span residues 92-113, 116-137, and 140-161; these read SLQL…AFIG, HLEY…TFRG, and SLIH…IFKG. The 51-residue stretch at 173 to 223 folds into the LRRCT domain; the sequence is NSFNCDCKLKWLVEWLGHTNATVEDIYCEGPPEYKKRKINSLSSKDFDCII. N192 is a glycosylation site (N-linked (GlcNAc...) asparagine). EAR repeat units follow at residues 225-267, 271-313, 317-364, 366-415, 419-462, 464-506, and 510-552; these read EFAK…EWDH, TFRN…KRDS, KFIK…KWNG, GFYS…QWNK, LFTN…KWGG, SFQD…NWDA, and KFVK…KHVI. N-linked (GlcNAc...) asparagine glycosylation is present at N277. An N-linked (GlcNAc...) asparagine glycan is attached at N422.

As to quaternary structure, oligomer. Interacts with KCNA1 within a complex containing KCNA1, KCNA4 and KCNAB1. Part of a complex containing ADAM22, DLG4/PSD95 and CACNG2/Stargazin. Can bind to ADAM11 and ADAM23. Post-translationally, glycosylated. Predominantly expressed in neural tissues, especially in brain. Expression is reduced in low-grade brain tumors and significantly reduced or absent in malignant gliomas. In terms of tissue distribution, expressed in the occipital cortex and hippocampus; higher amounts are observed in the parietal and frontal cortices, putamen, and, particularly, in the temporal neocortex, where it is between 3 and 5 times more abundant than in the hippocampus (at protein level). Expression is absent in the cerebellum. As to expression, abundantly expressed in the occipital cortex and weakly expressed in the hippocampus (at protein level).

Its subcellular location is the secreted. The protein localises to the synapse. It localises to the cytoplasm. It is found in the golgi apparatus. The protein resides in the endoplasmic reticulum. Regulates voltage-gated potassium channels assembled from KCNA1, KCNA4 and KCNAB1. It slows down channel inactivation by precluding channel closure mediated by the KCNAB1 subunit. Ligand for ADAM22 that positively regulates synaptic transmission mediated by AMPA-type glutamate receptors. Plays a role in suppressing the production of MMP1/3 through the phosphatidylinositol 3-kinase/ERK pathway. May play a role in the control of neuroblastoma cell survival. This is Leucine-rich glioma-inactivated protein 1 (LGI1) from Homo sapiens (Human).